We begin with the raw amino-acid sequence, 420 residues long: Glutamyl-tRNA reductase (420 aa).

Residues 49 to 52, Ser-109, 114 to 116, and Gln-120 each bind substrate; these read TCNR and EPQ. The active-site Nucleophile is Cys-50. 189-194 lines the NADP(+) pocket; it reads GAGETI.

This sequence belongs to the glutamyl-tRNA reductase family. As to quaternary structure, homodimer.

The catalysed reaction is (S)-4-amino-5-oxopentanoate + tRNA(Glu) + NADP(+) = L-glutamyl-tRNA(Glu) + NADPH + H(+). The protein operates within porphyrin-containing compound metabolism; protoporphyrin-IX biosynthesis; 5-aminolevulinate from L-glutamyl-tRNA(Glu): step 1/2. Its function is as follows. Catalyzes the NADPH-dependent reduction of glutamyl-tRNA(Glu) to glutamate 1-semialdehyde (GSA). The chain is Glutamyl-tRNA reductase from Photorhabdus laumondii subsp. laumondii (strain DSM 15139 / CIP 105565 / TT01) (Photorhabdus luminescens subsp. laumondii).